The following is a 355-amino-acid chain: Inner membrane protein YghQ (355 aa).

Over 1 to 37 (MAGFNIKHWFADGAFRTIIRNSAWLGSSNVVSALLGL) the chain is Periplasmic. Residues 38 to 58 (LALSCAGKGMTPAMFGVLVIV) traverse the membrane as a helical segment. At 59–100 (QSYAKSISDFIKFQTWQLVVQYGTPALTNNNPQQFRNVVSFS) the chain is on the cytoplasmic side. The helical transmembrane segment at 101 to 121 (FSLDIVSGAVAIVGGIALLPF) threads the bilayer. Over 122–134 (LSHSLGLDDQSFW) the chain is Periplasmic. A helical transmembrane segment spans residues 135–155 (LAALYCTLIPSMASSTPTGIL). Over 156 to 177 (RAVDRFDLIAVQQATKPFLRAA) the chain is Cytoplasmic. The chain crosses the membrane as a helical span at residues 178–198 (GSVVAWYFDFGFAGFVIAWYV). The Periplasmic segment spans residues 199–261 (SNLVGGTMYW…WSARNSCSTV (63 aa)). A helical membrane pass occupies residues 262–282 (LVGIVLGPAAAGLFKIAMTFF). The Cytoplasmic portion of the chain corresponds to 283 to 323 (DAAGTPAGLLGKSFYPEVMRLDPRTTRPWLLGVKSGLLAGG). A helical transmembrane segment spans residues 324-344 (IGILVALAVLIVGKPLISLVF). The Periplasmic segment spans residues 345-355 (GVKYLEAYDLI).

The protein resides in the cell inner membrane. The polypeptide is Inner membrane protein YghQ (yghQ) (Escherichia coli (strain K12)).